A 200-amino-acid chain; its full sequence is Nucleoside triphosphate pyrophosphatase (200 aa).

D79 serves as the catalytic Proton acceptor.

Belongs to the Maf family. A divalent metal cation is required as a cofactor.

Its subcellular location is the cytoplasm. The enzyme catalyses a ribonucleoside 5'-triphosphate + H2O = a ribonucleoside 5'-phosphate + diphosphate + H(+). It catalyses the reaction a 2'-deoxyribonucleoside 5'-triphosphate + H2O = a 2'-deoxyribonucleoside 5'-phosphate + diphosphate + H(+). Its function is as follows. Nucleoside triphosphate pyrophosphatase. May have a dual role in cell division arrest and in preventing the incorporation of modified nucleotides into cellular nucleic acids. In Legionella pneumophila subsp. pneumophila (strain Philadelphia 1 / ATCC 33152 / DSM 7513), this protein is Nucleoside triphosphate pyrophosphatase.